The sequence spans 529 residues: Cytochrome P450 monooxygenase ausG (529 aa).

A helical transmembrane segment spans residues 31-51 (FLVTCGLPWLLLLFSVTIILF). A heme-binding site is contributed by C470.

It belongs to the cytochrome P450 family. The cofactor is heme.

The protein localises to the membrane. Its pathway is secondary metabolite biosynthesis; terpenoid biosynthesis. Its function is as follows. Cytochrome P450 monooxygenase; part of the gene cluster B that mediates the biosynthesis of austinol and dehydroaustinol, two fungal meroterpenoids. The first step of the pathway is the synthesis of 3,5-dimethylorsellinic acid by the polyketide synthase ausA. 3,5-dimethylorsellinic acid is then prenylated by the polyprenyl transferase ausN. Further epoxidation by the FAD-dependent monooxygenase ausM and cyclization by the probable terpene cyclase ausL lead to the formation of protoaustinoid A. Protoaustinoid A is then oxidized to spiro-lactone preaustinoid A3 by the combined action of the FAD-binding monooxygenases ausB and ausC, and the dioxygenase ausE. Acid-catalyzed keto-rearrangement and ring contraction of the tetraketide portion of preaustinoid A3 by ausJ lead to the formation of preaustinoid A4. The aldo-keto reductase ausK, with the help of ausH, is involved in the next step by transforming preaustinoid A4 into isoaustinone which is in turn hydroxylated by the P450 monooxygenase ausI to form austinolide. Finally, the cytochrome P450 monooxygenase ausG modifies austinolide to austinol. Austinol can be further modified to dehydroaustinol which forms a diffusible complex with diorcinol that initiates conidiation. Due to genetic rearrangements of the clusters and the subsequent loss of some enzymes, the end products of the Emericella nidulans austinoid biosynthesis clusters are austinol and dehydroaustinol, even if additional enzymes, such as the O-acetyltransferase ausQ and the cytochrome P450 monooxygenase ausR are still functional. This Emericella nidulans (strain FGSC A4 / ATCC 38163 / CBS 112.46 / NRRL 194 / M139) (Aspergillus nidulans) protein is Cytochrome P450 monooxygenase ausG.